The primary structure comprises 423 residues: Major royal jelly protein 9 (423 aa).

The first 20 residues, 1–20, serve as a signal peptide directing secretion; it reads MSFNIWWLILYFSIVCQAKA. N-linked (GlcNAc...) asparagine glycosylation is found at Asn-110, Asn-118, Asn-177, Asn-196, and Asn-345.

It belongs to the major royal jelly protein family. In terms of tissue distribution, expressed at very low levels in the hypopharyngeal glands of adult worker bees (at protein level); expression peaks at 12 days post eclosion. Secreted into bee venom in the sting apparatus (at protein level). Expressed in the brains of adult worker bees peaking at 12 days post eclosion (at protein level). Expressed in the spermatheca of adult queen bees (at protein level); expression levels are higher in mated queens than in virgin queens. Along with Mrjp8 expressed at very low levels in the head of worker bees compared to other major royal jelly proteins.

It is found in the secreted. Component of bee sting venom. Component of royal jelly, a substance produced in the hypopharyngeal gland containing proteins, free amino acids, fatty acids, sugars and other nutrients, which is fed to developing larvae by worker nurse bees; may be present only at trace levels. All larvae are fed some royal jelly (also known as worker jelly) early in their development but it forms the principal source of nutrition for larvae destined to become queen bees. Produced in the spermatheca of adult queen bees, along with other major royal jelly proteins, where it may act as a nutrient supply for sperm stored by mated queens, or be involved in energy metabolism. In Apis mellifera (Honeybee), this protein is Major royal jelly protein 9.